Here is a 110-residue protein sequence, read N- to C-terminus: Large ribosomal subunit protein uL22 (110 aa).

The protein belongs to the universal ribosomal protein uL22 family. In terms of assembly, part of the 50S ribosomal subunit.

Functionally, this protein binds specifically to 23S rRNA; its binding is stimulated by other ribosomal proteins, e.g. L4, L17, and L20. It is important during the early stages of 50S assembly. It makes multiple contacts with different domains of the 23S rRNA in the assembled 50S subunit and ribosome. In terms of biological role, the globular domain of the protein is located near the polypeptide exit tunnel on the outside of the subunit, while an extended beta-hairpin is found that lines the wall of the exit tunnel in the center of the 70S ribosome. The polypeptide is Large ribosomal subunit protein uL22 (Dichelobacter nodosus (strain VCS1703A)).